A 345-amino-acid polypeptide reads, in one-letter code: Phosphoribosylformylglycinamidine cyclo-ligase (345 aa).

It belongs to the AIR synthase family.

The protein resides in the cytoplasm. The enzyme catalyses 2-formamido-N(1)-(5-O-phospho-beta-D-ribosyl)acetamidine + ATP = 5-amino-1-(5-phospho-beta-D-ribosyl)imidazole + ADP + phosphate + H(+). It participates in purine metabolism; IMP biosynthesis via de novo pathway; 5-amino-1-(5-phospho-D-ribosyl)imidazole from N(2)-formyl-N(1)-(5-phospho-D-ribosyl)glycinamide: step 2/2. This is Phosphoribosylformylglycinamidine cyclo-ligase from Pseudoalteromonas atlantica (strain T6c / ATCC BAA-1087).